The following is a 343-amino-acid chain: Chlorophyll(ide) b reductase NOL, chloroplastic (343 aa).

The N-terminal 54 residues, 1 to 54 (MAATAAYLPLRAQAQVGLAPLRPSGSAAAGARLPGRTARRRLAARGGPEAAGIR), are a transit peptide targeting the chloroplast. 78-102 (ITGSTKGIGYALAKEFLKAGDNVVI) provides a ligand contact to NAD(+). Tyrosine 228 acts as the Proton acceptor in catalysis.

This sequence belongs to the short-chain dehydrogenases/reductases (SDR) family. Interacts with NCY1 to form a complex that acts as a chlorophyll b reductase. As to expression, expressed in leaves and stems. Also detected in non-photosynthetic tissues such as roots.

The protein resides in the plastid. The protein localises to the chloroplast thylakoid membrane. The catalysed reaction is 7(1)-hydroxychlorophyllide a + NAD(+) = chlorophyllide b + NADH + H(+). It carries out the reaction 7(1)-hydroxychlorophyllide a + NADP(+) = chlorophyllide b + NADPH + H(+). Functionally, required for chlorophyll b degradation. The sequence is that of Chlorophyll(ide) b reductase NOL, chloroplastic (NOL) from Oryza sativa subsp. japonica (Rice).